The following is a 307-amino-acid chain: MSMILSASVIRVRDGLPLSASTDYEQSTGMQECRKYFKMLSRKLAQLPDRCTLKTGHYNINFISSLGVSYMMLCTENYPNVLAFSFLDELQKEFITTYNMMKTNTAVRPYCFIEFDNFIQRTKQRYNNPRSLSTKINLSDMQTEIKLRPPYQISMCELGSANGVTSAFSVDCKGAGKISSAHQRLEPATLSGIVGFILSLLCGALNLIRGFHAIESLLQSDGDDFNYIIAFFLGTAACLYQCYLLVYYTGWRNVKSFLTFGLICLCNMYLYELRNLWQLFFHVTVGAFVTLQIWLRQAQGKAPDYDV.

The residue at position 2 (S2) is an N-acetylserine. The Cytoplasmic portion of the chain corresponds to 2-187 (SMILSASVIR…ISSAHQRLEP (186 aa)). 2 positions are modified to phosphoserine: S6 and S8. Positions 8-119 (SVIRVRDGLP…YCFIEFDNFI (112 aa)) constitute a Longin domain. A helical transmembrane segment spans residues 188 to 208 (ATLSGIVGFILSLLCGALNLI). The Lumenal portion of the chain corresponds to 209 to 226 (RGFHAIESLLQSDGDDFN). A helical transmembrane segment spans residues 227 to 247 (YIIAFFLGTAACLYQCYLLVY). Residues 248-253 (YTGWRN) are Cytoplasmic-facing. The chain crosses the membrane as a helical span at residues 254–271 (VKSFLTFGLICLCNMYLY). Topologically, residues 272–274 (ELR) are lumenal. The helical transmembrane segment at 275–295 (NLWQLFFHVTVGAFVTLQIWL) threads the bilayer. At 296 to 307 (RQAQGKAPDYDV) the chain is on the cytoplasmic side.

This sequence belongs to the synaptobrevin family.

It is found in the endoplasmic reticulum membrane. In terms of biological role, may be involved in vesicle transport between the ER and the Golgi complex. The sequence is that of Vesicle-trafficking protein SEC22a (SEC22A) from Homo sapiens (Human).